Reading from the N-terminus, the 437-residue chain is Probable N-acetylmuramidase (437 aa).

Residues Met1–Ala57 form the signal peptide. 3 disordered regions span residues Ser217 to Thr244, Ser291 to Thr319, and Ala367 to Ala392. The LysM 1 domain maps to Thr243–Leu286. Residues Ser291–Ser317 are compositionally biased toward low complexity. Positions Thr319–Val362 constitute a LysM 2 domain. The region spanning Ser393 to Ile436 is the LysM 3 domain.

It belongs to the glycosyl hydrolase 73 family.

It localises to the secreted. It carries out the reaction Hydrolysis of (1-&gt;4)-beta-linkages between N-acetylmuramic acid and N-acetyl-D-glucosamine residues in a peptidoglycan and between N-acetyl-D-glucosamine residues in chitodextrins.. Hydrolyzes the cell wall of L.lactis and M.lysodeikticus. Required for cell separation during growth. The sequence is that of Probable N-acetylmuramidase (acmA) from Lactococcus lactis subsp. cremoris (Streptococcus cremoris).